A 528-amino-acid polypeptide reads, in one-letter code: Probable methylmalonate-semialdehyde/malonate-semialdehyde dehydrogenase [acylating], mitochondrial (528 aa).

Residues Met1–Leu26 constitute a mitochondrion transit peptide. Positions 175, 199, 202, and 203 each coordinate NAD(+). The Nucleophile role is filled by Cys307. Glu408 serves as a coordination point for NAD(+).

Belongs to the aldehyde dehydrogenase family. As to quaternary structure, homotetramer.

It localises to the mitochondrion. It catalyses the reaction 2-methyl-3-oxopropanoate + NAD(+) + CoA + H2O = propanoyl-CoA + hydrogencarbonate + NADH + H(+). It carries out the reaction 3-oxopropanoate + NAD(+) + CoA + H2O = hydrogencarbonate + acetyl-CoA + NADH + H(+). Functionally, probable malonate and methylmalonate semialdehyde dehydrogenase involved in the catabolism of valine, thymine, and compounds catabolized by way of beta-alanine, including uracil and cytidine. The protein is Probable methylmalonate-semialdehyde/malonate-semialdehyde dehydrogenase [acylating], mitochondrial (mmsdh) of Dictyostelium discoideum (Social amoeba).